A 360-amino-acid polypeptide reads, in one-letter code: Vomilenine reductase (360 aa).

An Enoyl reductase (ER) domain is found at 23–351 (GLLSPFNFSR…KADVKYRFVI (329 aa)). Cys-50 is a Zn(2+) binding site. Ser-52 contributes to the an alcohol binding site. Ser-52 is an NADP(+) binding site. Zn(2+)-binding residues include Asp-53, His-72, Glu-73, Cys-103, Cys-106, Cys-109, Cys-117, and Cys-166. His-72 contacts an alcohol. Residues Leu-192, Gly-194, Leu-195, Ser-214, Thr-215, Ser-216, Lys-219, Lys-220, Val-277, Ala-279, Ser-301, and Arg-348 each coordinate NADP(+).

This sequence belongs to the zinc-containing alcohol dehydrogenase family. Class-P subfamily. As to quaternary structure, homodimer. Requires Zn(2+) as cofactor. In terms of tissue distribution, confined to roots.

The protein localises to the cytoplasm. It catalyses the reaction (2R)-1,2-dihydrovomilenine + NADP(+) = vomilenine + NADPH + H(+). It participates in alkaloid biosynthesis; ajmaline biosynthesis. Inhibited by EDTA and p-hydroxymercuribenzoate, a sulfhydryl reagent. Alcohol dehydrogenase involved in the biosynthesis of ajmaline-type monoterpenoid indole alkaloids (MIAs) natural products, important plant-derived pharmaceuticals used in the therapy of heart disorders. Catalyzes the conversion of vomilenine to 1,2-dihydrovomilenine, an intermediate chemical in the biosynthesis of ajmaline. In Rauvolfia serpentina (Serpentine wood), this protein is Vomilenine reductase.